A 213-amino-acid polypeptide reads, in one-letter code: Ribonuclease Oy (213 aa).

Histidine 35 is an active-site residue. A disulfide bridge links cysteine 51 with cysteine 96. An N-linked (GlcNAc...) asparagine glycan is attached at asparagine 52. Catalysis depends on residues glutamate 89 and histidine 93. Asparagine 121 and asparagine 142 each carry an N-linked (GlcNAc...) asparagine glycan. Intrachain disulfides connect cysteine 160-cysteine 198 and cysteine 178-cysteine 188.

It belongs to the RNase T2 family.

It localises to the secreted. Releases mononucleotides from RNA in the order of 3'-GMP, 3'-AMP and 3'-UMP. The protein is Ribonuclease Oy of Magallana gigas (Pacific oyster).